Here is a 380-residue protein sequence, read N- to C-terminus: Cytochrome b (380 aa).

A run of 4 helical transmembrane segments spans residues 34-54, 78-99, 114-134, and 179-199; these read FGSL…LLAA, WLIR…YLHI, WNTG…GYVL, and FFTL…IHLT. Positions 84 and 98 each coordinate heme b. Histidine 183 and histidine 197 together coordinate heme b. Histidine 202 is a binding site for a ubiquinone. Helical transmembrane passes span 227–247, 289–309, 321–341, and 348–368; these read LKDI…ALFS, LGGV…PLLH, FSQL…WVGS, and FIII…ILFP.

It belongs to the cytochrome b family. As to quaternary structure, the cytochrome bc1 complex contains 11 subunits: 3 respiratory subunits (MT-CYB, CYC1 and UQCRFS1), 2 core proteins (UQCRC1 and UQCRC2) and 6 low-molecular weight proteins (UQCRH/QCR6, UQCRB/QCR7, UQCRQ/QCR8, UQCR10/QCR9, UQCR11/QCR10 and a cleavage product of UQCRFS1). This cytochrome bc1 complex then forms a dimer. Requires heme b as cofactor.

The protein localises to the mitochondrion inner membrane. Its function is as follows. Component of the ubiquinol-cytochrome c reductase complex (complex III or cytochrome b-c1 complex) that is part of the mitochondrial respiratory chain. The b-c1 complex mediates electron transfer from ubiquinol to cytochrome c. Contributes to the generation of a proton gradient across the mitochondrial membrane that is then used for ATP synthesis. The sequence is that of Cytochrome b (MT-CYB) from Bugeranus carunculatus (Wattled crane).